Consider the following 191-residue polypeptide: Reticulon-like protein B15 (191 aa).

The 179-residue stretch at 13–191 (VADLCLWKDK…SKIPRAPKVE (179 aa)) folds into the Reticulon domain. The next 3 helical transmembrane spans lie at 23–43 (INSGITLVMATLFWFLLEFME), 47–67 (VPLLCSILLLLMLILFLWAKF), and 122–142 (VAIIYNIGSYISLLTILYICL).

The protein localises to the endoplasmic reticulum membrane. In Arabidopsis thaliana (Mouse-ear cress), this protein is Reticulon-like protein B15 (RTNLB15).